A 366-amino-acid chain; its full sequence is Aminomethyltransferase (366 aa).

This sequence belongs to the GcvT family. In terms of assembly, the glycine cleavage system is composed of four proteins: P, T, L and H.

The enzyme catalyses N(6)-[(R)-S(8)-aminomethyldihydrolipoyl]-L-lysyl-[protein] + (6S)-5,6,7,8-tetrahydrofolate = N(6)-[(R)-dihydrolipoyl]-L-lysyl-[protein] + (6R)-5,10-methylene-5,6,7,8-tetrahydrofolate + NH4(+). Functionally, the glycine cleavage system catalyzes the degradation of glycine. In Thermosynechococcus vestitus (strain NIES-2133 / IAM M-273 / BP-1), this protein is Aminomethyltransferase.